The sequence spans 31 residues: Photosystem II reaction center protein T (31 aa).

Residues 3–23 traverse the membrane as a helical segment; it reads SVAYILVLTMTLAVLFFAIAF.

This sequence belongs to the PsbT family. In terms of assembly, PSII is composed of 1 copy each of membrane proteins PsbA, PsbB, PsbC, PsbD, PsbE, PsbF, PsbH, PsbI, PsbJ, PsbK, PsbL, PsbM, PsbT, PsbX, PsbY, PsbZ, Psb30/Ycf12, peripheral proteins PsbO, CyanoQ (PsbQ), PsbU, PsbV and a large number of cofactors. It forms dimeric complexes.

It is found in the cellular thylakoid membrane. Its function is as follows. Found at the monomer-monomer interface of the photosystem II (PS II) dimer, plays a role in assembly and dimerization of PSII. PSII is a light-driven water plastoquinone oxidoreductase, using light energy to abstract electrons from H(2)O, generating a proton gradient subsequently used for ATP formation. This Rippkaea orientalis (strain PCC 8801 / RF-1) (Cyanothece sp. (strain PCC 8801)) protein is Photosystem II reaction center protein T.